Reading from the N-terminus, the 1377-residue chain is DNA-directed RNA polymerase subunit beta (1377 aa).

This sequence belongs to the RNA polymerase beta chain family. As to quaternary structure, the RNAP catalytic core consists of 2 alpha, 1 beta, 1 beta' and 1 omega subunit. When a sigma factor is associated with the core the holoenzyme is formed, which can initiate transcription.

It catalyses the reaction RNA(n) + a ribonucleoside 5'-triphosphate = RNA(n+1) + diphosphate. Functionally, DNA-dependent RNA polymerase catalyzes the transcription of DNA into RNA using the four ribonucleoside triphosphates as substrates. The chain is DNA-directed RNA polymerase subunit beta from Azoarcus sp. (strain BH72).